Consider the following 338-residue polypeptide: Glycerol-3-phosphate dehydrogenase [NAD(P)+] (338 aa).

The NADPH site is built by Ser-14, Tyr-15, His-35, and Lys-109. Residues Lys-109, Gly-138, and Thr-140 each contribute to the sn-glycerol 3-phosphate site. Residue Ala-142 participates in NADPH binding. Sn-glycerol 3-phosphate is bound by residues Lys-194, Asp-247, Ser-257, Arg-258, and Asn-259. The active-site Proton acceptor is the Lys-194. Arg-258 lines the NADPH pocket. NADPH contacts are provided by Val-282 and Glu-284.

Belongs to the NAD-dependent glycerol-3-phosphate dehydrogenase family.

Its subcellular location is the cytoplasm. The enzyme catalyses sn-glycerol 3-phosphate + NAD(+) = dihydroxyacetone phosphate + NADH + H(+). It carries out the reaction sn-glycerol 3-phosphate + NADP(+) = dihydroxyacetone phosphate + NADPH + H(+). It participates in membrane lipid metabolism; glycerophospholipid metabolism. In terms of biological role, catalyzes the reduction of the glycolytic intermediate dihydroxyacetone phosphate (DHAP) to sn-glycerol 3-phosphate (G3P), the key precursor for phospholipid synthesis. This is Glycerol-3-phosphate dehydrogenase [NAD(P)+] from Shewanella sediminis (strain HAW-EB3).